Reading from the N-terminus, the 131-residue chain is Sec-independent protein translocase protein TatB (131 aa).

The chain crosses the membrane as a helical span at residues 1 to 21 (MFDISFAELVVVGIVALIVIG). 2 stretches are compositionally biased toward polar residues: residues 71–93 (NSFE…TQSA) and 111–131 (PVNT…QPNS). A disordered region spans residues 71–131 (NSFENSVRSE…APAEPRQPNS (61 aa)).

This sequence belongs to the TatB family. The Tat system comprises two distinct complexes: a TatABC complex, containing multiple copies of TatA, TatB and TatC subunits, and a separate TatA complex, containing only TatA subunits. Substrates initially bind to the TatABC complex, which probably triggers association of the separate TatA complex to form the active translocon.

The protein resides in the cell inner membrane. In terms of biological role, part of the twin-arginine translocation (Tat) system that transports large folded proteins containing a characteristic twin-arginine motif in their signal peptide across membranes. Together with TatC, TatB is part of a receptor directly interacting with Tat signal peptides. TatB may form an oligomeric binding site that transiently accommodates folded Tat precursor proteins before their translocation. This Nitrosomonas europaea (strain ATCC 19718 / CIP 103999 / KCTC 2705 / NBRC 14298) protein is Sec-independent protein translocase protein TatB.